A 159-amino-acid polypeptide reads, in one-letter code: Probable metallophosphoesterase MPN_126 (159 aa).

Mn(2+) is bound by residues Asp-9, His-11, Asp-34, Asn-53, His-75, His-107, and His-109.

It belongs to the metallophosphoesterase superfamily. YfcE family. Mn(2+) is required as a cofactor.

The chain is Probable metallophosphoesterase MPN_126 from Mycoplasma pneumoniae (strain ATCC 29342 / M129 / Subtype 1) (Mycoplasmoides pneumoniae).